The following is a 349-amino-acid chain: tRNA pseudouridine synthase D (349 aa).

Phe27 provides a ligand contact to substrate. Asp80 functions as the Nucleophile in the catalytic mechanism. Asn129 contributes to the substrate binding site. The TRUD domain maps to 155 to 303 (GVPNYFGAQR…VEAARRAMLL (149 aa)). Phe329 serves as a coordination point for substrate.

This sequence belongs to the pseudouridine synthase TruD family.

It catalyses the reaction uridine(13) in tRNA = pseudouridine(13) in tRNA. Functionally, responsible for synthesis of pseudouridine from uracil-13 in transfer RNAs. The polypeptide is tRNA pseudouridine synthase D (Escherichia coli O7:K1 (strain IAI39 / ExPEC)).